Reading from the N-terminus, the 257-residue chain is Exosome complex component mtr3 (257 aa).

Belongs to the RNase PH family. Component of the RNA exosome complex. Specifically part of the catalytically inactive RNA exosome core complex (Exo-9) may associate with the catalytic subunits rrp6 and dis3 in cytoplasmic- and nuclear-specific RNA exosome complex forms. Exo-9 is formed by a hexameric base ring of RNase PH domain-containing subunits and a cap ring consisting of csl4, rrp4 and rrp40.

It is found in the cytoplasm. Its subcellular location is the nucleus. The protein resides in the nucleolus. In terms of biological role, non-catalytic component of the RNA exosome complex which has 3'-&gt;5' exoribonuclease activity and participates in a multitude of cellular RNA processing and degradation events. In the nucleus, the RNA exosome complex is involved in proper maturation of stable RNA species such as rRNA, snRNA and snoRNA, in the elimination of RNA processing by-products and non-coding 'pervasive' transcripts, such as antisense RNA species and cryptic unstable transcripts (CUTs), and of mRNAs with processing defects, thereby limiting or excluding their export to the cytoplasm. In the cytoplasm, the RNA exosome complex is involved in general mRNA turnover and in RNA surveillance pathways, preventing translation of aberrant mRNAs. The catalytic inactive RNA exosome core complex of 9 subunits (Exo-9) is proposed to play a pivotal role in the binding and presentation of RNA for ribonucleolysis, and to serve as a scaffold for the association with catalytic subunits and accessory proteins or complexes. ski6 is part of the hexameric ring of RNase PH domain-containing subunits proposed to form a central channel which threads RNA substrates for degradation. The polypeptide is Exosome complex component mtr3 (mtr3) (Schizosaccharomyces pombe (strain 972 / ATCC 24843) (Fission yeast)).